The following is a 301-amino-acid chain: Light-independent protochlorophyllide reductase iron-sulfur ATP-binding protein (301 aa).

Residues 1-13 (MNVTLRPPLAAAP) show a composition bias toward low complexity. A disordered region spans residues 1–22 (MNVTLRPPLAAAPRRPDGAGSV). ATP contacts are provided by residues 45 to 50 (GIGKST) and Lys-74. Ser-49 contributes to the Mg(2+) binding site. Cys-130 and Cys-164 together coordinate [4Fe-4S] cluster. ATP contacts are provided by residues 215–216 (NR) and 239–241 (PDL).

The protein belongs to the NifH/BchL/ChlL family. In terms of assembly, homodimer. Protochlorophyllide reductase is composed of three subunits; BchL, BchN and BchB. It depends on [4Fe-4S] cluster as a cofactor.

It catalyses the reaction chlorophyllide a + oxidized 2[4Fe-4S]-[ferredoxin] + 2 ADP + 2 phosphate = protochlorophyllide a + reduced 2[4Fe-4S]-[ferredoxin] + 2 ATP + 2 H2O. Its pathway is porphyrin-containing compound metabolism; bacteriochlorophyll biosynthesis (light-independent). In terms of biological role, component of the dark-operative protochlorophyllide reductase (DPOR) that uses Mg-ATP and reduced ferredoxin to reduce ring D of protochlorophyllide (Pchlide) to form chlorophyllide a (Chlide). This reaction is light-independent. The L component serves as a unique electron donor to the NB-component of the complex, and binds Mg-ATP. The chain is Light-independent protochlorophyllide reductase iron-sulfur ATP-binding protein from Bradyrhizobium sp. (strain ORS 278).